The primary structure comprises 334 residues: Tyrosine-protein kinase SRK3 (334 aa).

Residues 1–42 (IRTLDDGGFYMANRISFPTLQNLVSHYMMDADGLAQRLSRPC) form the SH2 domain. The 256-residue stretch at 66–321 (IQLQRKLGQG…LKNLLEDYYV (256 aa)) folds into the Protein kinase domain. ATP contacts are provided by residues 72–80 (LGQGNFGEV) and Lys94. Residue Asp186 is the Proton acceptor of the active site.

This sequence belongs to the protein kinase superfamily. Tyr protein kinase family.

Its subcellular location is the cytoplasm. It carries out the reaction L-tyrosyl-[protein] + ATP = O-phospho-L-tyrosyl-[protein] + ADP + H(+). The protein is Tyrosine-protein kinase SRK3 (SRK3) of Spongilla lacustris (Freshwater sponge).